We begin with the raw amino-acid sequence, 130 residues long: Small ribosomal subunit protein uS9 (130 aa).

The protein belongs to the universal ribosomal protein uS9 family.

The chain is Small ribosomal subunit protein uS9 from Geobacillus thermodenitrificans (strain NG80-2).